We begin with the raw amino-acid sequence, 157 residues long: Aspartate carbamoyltransferase regulatory chain (157 aa).

4 residues coordinate Zn(2+): cysteine 108, cysteine 113, cysteine 138, and cysteine 141.

This sequence belongs to the PyrI family. As to quaternary structure, contains catalytic and regulatory chains. It depends on Zn(2+) as a cofactor.

Functionally, involved in allosteric regulation of aspartate carbamoyltransferase. In Korarchaeum cryptofilum (strain OPF8), this protein is Aspartate carbamoyltransferase regulatory chain.